We begin with the raw amino-acid sequence, 743 residues long: Homeobox-leucine zipper protein PROTODERMAL FACTOR 2 (743 aa).

Residues 1-72 (MYHPNMFESH…KKRYHRHTQR (72 aa)) are disordered. Basic and acidic residues predominate over residues 30-39 (SREDDFETKS). A compositionally biased stretch (basic residues) spans 60–71 (PNKKKRYHRHTQ). The homeobox DNA-binding region spans 62–121 (KKKRYHRHTQRQIQELESFFKECPHPDDKQRKELSRDLNLEPLQVKFWFQNKRTQMKAQS). Residues 110–192 (FQNKRTQMKA…DRISAIAAKY (83 aa)) adopt a coiled-coil conformation. An START domain is found at 244–476 (SETDKPIIVE…LERQCERLAS (233 aa)).

The protein belongs to the HD-ZIP homeobox family. Class IV subfamily. In terms of assembly, interacts with GAI/RGA2, RGA/RGA1/GRS, RGL2/SCL19 and ATML1. Binds to AIL7/PLT7, ANT, BBM and AIL1. Specifically expressed in the layer 1 (L1) of shoot meristems.

The protein localises to the nucleus. Functionally, probable transcription factor that binds to the L1 box DNA sequence 5'-TAAATG[CT]A-3'. Plays a role in maintaining the identity of L1 cells, possibly by interacting with their L1 box or other target-gene promoters; binds to the LIP1 gene promoter and stimulates its expression upon imbibition. Acts as a positive regulator of gibberellins (GAs)-regulated epidermal gene expression (e.g. LIP1, LIP2, LTP1, FDH and PDF1). Functionally redundant to ATML1. Involved, together with HDG proteins (e.g. HDG1, HDG2, HDG5 and HDG12), in the regulation of flower organs development by promoting the expression of APETALA 3 (AP3) in the epidermis and internal cell layers of developing flowers. Seems to promote cell differentiation. The polypeptide is Homeobox-leucine zipper protein PROTODERMAL FACTOR 2 (Arabidopsis thaliana (Mouse-ear cress)).